Reading from the N-terminus, the 820-residue chain is Leucine--tRNA ligase (820 aa).

Positions 42-52 (PYPSGDLHMGH) match the 'HIGH' region motif. The 'KMSKS' region signature appears at 576-580 (KMSKS). Lys579 contributes to the ATP binding site.

The protein belongs to the class-I aminoacyl-tRNA synthetase family.

It localises to the cytoplasm. It catalyses the reaction tRNA(Leu) + L-leucine + ATP = L-leucyl-tRNA(Leu) + AMP + diphosphate. The chain is Leucine--tRNA ligase from Coxiella burnetii (strain RSA 493 / Nine Mile phase I).